The sequence spans 343 residues: WAT1-related protein At1g43650 (343 aa).

10 consecutive transmembrane segments (helical) span residues 9–29, 36–56, 65–85, 98–118, 130–150, 175–195, 209–229, 239–259, 272–292, and 296–316; these read MAMV…KVAI, FVFV…FAFF, LSFI…TLSL, TFAA…ALLF, GVAK…FAFV, SVKG…WIIM, LVAL…VAVN, FGLP…LTYW, FTAL…SFLF, and FYLG…LGLW. 2 EamA domains span residues 16 to 139 and 188 to 313; these read IVYA…GSMV and CWCL…GLYL.

This sequence belongs to the drug/metabolite transporter (DMT) superfamily. Plant drug/metabolite exporter (P-DME) (TC 2.A.7.4) family.

It localises to the membrane. The protein is WAT1-related protein At1g43650 of Arabidopsis thaliana (Mouse-ear cress).